The following is a 493-amino-acid chain: MEHQLTIYNTLDRKKELFVPLHAPHVGMYVCGPTVYGDAHLGHARPAITFDVLFRYLTHLGYKVRYVRNITDVGHLEHDADEGEDKIAKKARLEELEPMEVVQYYLNRYHKAMEALNVLSPSIEPHASGHIIEQIQLVQKILDAGYAYESEGSVYFDVAKYNKDYHYGKLSGRNLDDVLNTTRDLDGQSEKRNPADFALWKKAQPEHIMRWPSPWSDGFPGWHAECTAMGRKYLGEHFDIHGGGMDLIFPHHECEIAQSVASQGDDMVHYWMHNNMITINGTKMGKSLGNFITLDEFFNGTHKLLAQAYTPMTIRFFILQAHYRSTVDFSNEALQASEKGLQRLIEAIEGLDKITPAATTSEGINVKELRAKCYEAMNDDLNTPIVIAQLFEGARIINNINAGNATISAEDLKDLKETFHLFCFDIMGLKEEKGSSDGREAAYGKVVDMLLEQRMKAKANKDWATSDEIRNTLTALGFEVKDTKDGFEWRLNK.

Residue Cys-31 participates in Zn(2+) binding. The short motif at 33–43 (PTVYGDAHLGH) is the 'HIGH' region element. Cys-226, His-251, and Glu-255 together coordinate Zn(2+). Residues 283–287 (KMGKS) carry the 'KMSKS' region motif. ATP is bound at residue Lys-286.

It belongs to the class-I aminoacyl-tRNA synthetase family. Monomer. It depends on Zn(2+) as a cofactor.

The protein resides in the cytoplasm. The catalysed reaction is tRNA(Cys) + L-cysteine + ATP = L-cysteinyl-tRNA(Cys) + AMP + diphosphate. This Bacteroides thetaiotaomicron (strain ATCC 29148 / DSM 2079 / JCM 5827 / CCUG 10774 / NCTC 10582 / VPI-5482 / E50) protein is Cysteine--tRNA ligase.